We begin with the raw amino-acid sequence, 205 residues long: Suppressor of IKBKE 1 (205 aa).

Coiled coils occupy residues Thr-4–Gln-32 and Lys-154–Arg-192.

Belongs to the SIKE family. As to quaternary structure, interacts with IKBKE and TBK1 via its coiled coil region. Interaction with TBK1 is disrupted upon viral infection or TLR3 stimulation. Interacts with CDC42BPB. Associates with the STRIPAK core complex composed of PP2A catalytic and scaffolding subunits, the striatins (PP2A regulatory subunits), the striatin-associated proteins MOB4, STRIP1 and STRIP2, PDCD10 and members of the STE20 kinases, such as STK24 and STK26.

It is found in the cytoplasm. Suppressor of IKK-epsilon. Associates with the striatin-interacting phosphatase and kinase (STRIPAK) core complex, forming the extended (SIKE1:SLMAP)STRIPAK complex. The (SIKE1:SLMAP)STRIPAK complex dephosphorylates STK3 leading to the inhibition of Hippo signaling and the control of cell growth. This is Suppressor of IKBKE 1 (sike1) from Xenopus laevis (African clawed frog).